The chain runs to 288 residues: N-acetylneuraminate lyase (288 aa).

Aceneuramate-binding residues include Ser-44 and Thr-45. Tyr-133 acts as the Proton donor in catalysis. Lys-161 (schiff-base intermediate with substrate) is an active-site residue. Aceneuramate-binding residues include Thr-163, Gly-185, Asp-187, Glu-188, and Ser-204.

It belongs to the DapA family. NanA subfamily. In terms of assembly, homotetramer.

It is found in the cytoplasm. It carries out the reaction aceneuramate = aldehydo-N-acetyl-D-mannosamine + pyruvate. It participates in amino-sugar metabolism; N-acetylneuraminate degradation; D-fructose 6-phosphate from N-acetylneuraminate: step 1/5. In terms of biological role, catalyzes the reversible aldol cleavage of N-acetylneuraminic acid (sialic acid; Neu5Ac) to form pyruvate and N-acetylmannosamine (ManNAc) via a Schiff base intermediate. The sequence is that of N-acetylneuraminate lyase from Clostridium perfringens (strain ATCC 13124 / DSM 756 / JCM 1290 / NCIMB 6125 / NCTC 8237 / Type A).